Reading from the N-terminus, the 157-residue chain is Protein Smg homolog (157 aa).

This sequence belongs to the Smg family.

The sequence is that of Protein Smg homolog from Xanthomonas oryzae pv. oryzae (strain MAFF 311018).